The chain runs to 52 residues: DNA-directed RNA polymerase subunit Rpo12 (52 aa).

Zn(2+) is bound by residues Cys13, Cys30, and Cys33.

It belongs to the archaeal Rpo12/eukaryotic RPC10 RNA polymerase subunit family. In terms of assembly, part of the RNA polymerase complex. Requires Zn(2+) as cofactor.

The protein localises to the cytoplasm. The catalysed reaction is RNA(n) + a ribonucleoside 5'-triphosphate = RNA(n+1) + diphosphate. DNA-dependent RNA polymerase (RNAP) catalyzes the transcription of DNA into RNA using the four ribonucleoside triphosphates as substrates. The sequence is that of DNA-directed RNA polymerase subunit Rpo12 from Pyrobaculum neutrophilum (strain DSM 2338 / JCM 9278 / NBRC 100436 / V24Sta) (Thermoproteus neutrophilus).